The sequence spans 1405 residues: DNA-directed RNA polymerase subunit beta' (1405 aa).

Positions 70, 72, 85, and 88 each coordinate Zn(2+). Residues Asp460, Asp462, and Asp464 each coordinate Mg(2+). Zn(2+)-binding residues include Cys815, Cys889, Cys896, and Cys899. The disordered stretch occupies residues 1363 to 1388 (LAHHAERRRRREDPESTANPSAFDVE).

Belongs to the RNA polymerase beta' chain family. As to quaternary structure, the RNAP catalytic core consists of 2 alpha, 1 beta, 1 beta' and 1 omega subunit. When a sigma factor is associated with the core the holoenzyme is formed, which can initiate transcription. The cofactor is Mg(2+). Requires Zn(2+) as cofactor.

The catalysed reaction is RNA(n) + a ribonucleoside 5'-triphosphate = RNA(n+1) + diphosphate. In terms of biological role, DNA-dependent RNA polymerase catalyzes the transcription of DNA into RNA using the four ribonucleoside triphosphates as substrates. This is DNA-directed RNA polymerase subunit beta' from Chromohalobacter salexigens (strain ATCC BAA-138 / DSM 3043 / CIP 106854 / NCIMB 13768 / 1H11).